A 296-amino-acid polypeptide reads, in one-letter code: uncharacterized protein (296 aa).

It localises to the mitochondrion. This is an uncharacterized protein from Podospora anserina (strain S / ATCC MYA-4624 / DSM 980 / FGSC 10383) (Pleurage anserina).